We begin with the raw amino-acid sequence, 175 residues long: Protein FAM89A (175 aa).

The segment at 141-175 (FQEQGSLQDGQHHGSPRDQSPLTHLSSSDWILESI) is disordered. The span at 157 to 169 (RDQSPLTHLSSSD) shows a compositional bias: polar residues.

Belongs to the FAM89 family.

This chain is Protein FAM89A (Fam89a), found in Mus musculus (Mouse).